Reading from the N-terminus, the 90-residue chain is Small ribosomal subunit protein uS15 (90 aa).

Belongs to the universal ribosomal protein uS15 family. As to quaternary structure, part of the 30S ribosomal subunit. Forms a bridge to the 50S subunit in the 70S ribosome, contacting the 23S rRNA.

Functionally, one of the primary rRNA binding proteins, it binds directly to 16S rRNA where it helps nucleate assembly of the platform of the 30S subunit by binding and bridging several RNA helices of the 16S rRNA. In terms of biological role, forms an intersubunit bridge (bridge B4) with the 23S rRNA of the 50S subunit in the ribosome. The sequence is that of Small ribosomal subunit protein uS15 from Wolinella succinogenes (strain ATCC 29543 / DSM 1740 / CCUG 13145 / JCM 31913 / LMG 7466 / NCTC 11488 / FDC 602W) (Vibrio succinogenes).